A 430-amino-acid polypeptide reads, in one-letter code: Glutamate-1-semialdehyde 2,1-aminomutase (430 aa).

Lys-268 carries the post-translational modification N6-(pyridoxal phosphate)lysine.

The protein belongs to the class-III pyridoxal-phosphate-dependent aminotransferase family. HemL subfamily. Requires pyridoxal 5'-phosphate as cofactor.

It is found in the cytoplasm. The catalysed reaction is (S)-4-amino-5-oxopentanoate = 5-aminolevulinate. It participates in porphyrin-containing compound metabolism; protoporphyrin-IX biosynthesis; 5-aminolevulinate from L-glutamyl-tRNA(Glu): step 2/2. This Methanopyrus kandleri (strain AV19 / DSM 6324 / JCM 9639 / NBRC 100938) protein is Glutamate-1-semialdehyde 2,1-aminomutase.